We begin with the raw amino-acid sequence, 237 residues long: Ribonuclease PH (237 aa).

Phosphate-binding positions include Arg-86 and 124–126 (GTR).

Belongs to the RNase PH family. Homohexameric ring arranged as a trimer of dimers.

It carries out the reaction tRNA(n+1) + phosphate = tRNA(n) + a ribonucleoside 5'-diphosphate. Functionally, phosphorolytic 3'-5' exoribonuclease that plays an important role in tRNA 3'-end maturation. Removes nucleotide residues following the 3'-CCA terminus of tRNAs; can also add nucleotides to the ends of RNA molecules by using nucleoside diphosphates as substrates, but this may not be physiologically important. Probably plays a role in initiation of 16S rRNA degradation (leading to ribosome degradation) during starvation. This chain is Ribonuclease PH, found in Erythrobacter litoralis (strain HTCC2594).